Consider the following 167-residue polypeptide: Translationally-controlled tumor protein homolog (167 aa).

The region spanning 1 to 167 (MIIYKDIFSG…WKHGIDEEKI (167 aa)) is the TCTP domain.

This sequence belongs to the TCTP family.

The protein resides in the cytoplasm. Its subcellular location is the cytoskeleton. Functionally, involved in protein synthesis. Involved in microtubule stabilization. This Candida glabrata (strain ATCC 2001 / BCRC 20586 / JCM 3761 / NBRC 0622 / NRRL Y-65 / CBS 138) (Yeast) protein is Translationally-controlled tumor protein homolog.